A 62-amino-acid polypeptide reads, in one-letter code: Conotoxin Qc5.1 (62 aa).

Residues 1–22 (MRCVPVFIILLLLSPSAPSVDA) form the signal peptide. Residues 23–48 (HPMTKDDVPQASFHDDAKRTLQVPWM) constitute a propeptide that is removed on maturation. Valine amide is present on Val-60.

Belongs to the conotoxin T superfamily. Post-translationally, contains 2 disulfide bonds that can be either 'C1-C3, C2-C4' or 'C1-C4, C2-C3', since these disulfide connectivities have been observed for conotoxins with cysteine framework V (for examples, see AC P0DQQ7 and AC P81755). In terms of tissue distribution, expressed by the venom duct.

It localises to the secreted. In Conus quercinus (Oak cone), this protein is Conotoxin Qc5.1.